The chain runs to 439 residues: UPF0489 protein C5orf22 homolog (439 aa).

A disordered region spans residues 163 to 219 (TTKLENGQSGAKIPKAAQTQDDMQSKADTPCTSSSQPPDGSAASGNISETAKKKADD). The span at 179–211 (AQTQDDMQSKADTPCTSSSQPPDGSAASGNISE) shows a compositional bias: polar residues.

This sequence belongs to the UPF0489 family.

The polypeptide is UPF0489 protein C5orf22 homolog (Danio rerio (Zebrafish)).